The chain runs to 382 residues: MKALHFGAGNIGRGFIGKLLADAGIQLTFADVNQVVLDALNARHSYQVHVVGENEQVDTVSGVNAVSSIGDDVVDLIAHVDLITTAVGPVVLERIAPAIAKGLVKRKAQGVDAPLNIIACENMVRGTTQLKGHVMNALADGDKAWVEQHVGFVDSAVDRIVPPSASATNDPLEVTVETFSEWIVDKTQFKGALPNIPGMELTDNLMAFVERKLFTLNTGHAITAYLGKLAGHQTIRDAILDEGIRAVVKGAMEESGAVLIKRYGFDADKHAAYIQKILGRFENPYLKDDVERVGRQPLRKLSAGDRLIKPLLGTLEYGLPHVNLVKGIAAAMHFRSDEDPQAQELAALITEKGPQAALAQISGLDANSDVVAEAVNAYNATK.

Residue 3 to 14 (ALHFGAGNIGRG) participates in NAD(+) binding.

It belongs to the mannitol dehydrogenase family.

The catalysed reaction is D-mannitol 1-phosphate + NAD(+) = beta-D-fructose 6-phosphate + NADH + H(+). This chain is Mannitol-1-phosphate 5-dehydrogenase, found in Salmonella typhi.